The following is a 312-amino-acid chain: MIIETPSKVILFGEHAVVYGYRAISMAIDLTSTIEIKETQEDEIILNLNDLNKSLGLNLNEIKNINPNNFGDFKYCLCAIKNTLDYLNIEPKTGFKINISSKIPISCGLGSSASITIGTIKAVSGFYNKELKDDEIAKLGYMVEKEIQGKASITDTSTITYKGILEIKNNKFRKIKGEFEEFLKNCKFLIVYAEKRKKKTAELVNEVAKIENKDEIFKEIDKVIDEALKIKNKEDFGKLMTKNHELLKKLNISTPKLDRIVDIGNRFGFGAKLTGAGGGGCVIILVNEEKEKELLKELNKEDVRIFNCRMMN.

104–114 serves as a coordination point for ATP; sequence PISCGLGSSAS. Asp-155 (proton acceptor) is an active-site residue.

The protein belongs to the GHMP kinase family. Mevalonate kinase subfamily. Homodimer. It depends on Mg(2+) as a cofactor.

The protein localises to the cytoplasm. It catalyses the reaction (R)-mevalonate + ATP = (R)-5-phosphomevalonate + ADP + H(+). Its pathway is isoprenoid biosynthesis; isopentenyl diphosphate biosynthesis via mevalonate pathway; isopentenyl diphosphate from (R)-mevalonate: step 1/3. Its activity is regulated as follows. Farnesyl- and geranyl-pyrophosphates are competitive inhibitors. Slightly inhibited by high concentration of ATP. Catalyzes the phosphorylation of (R)-mevalonate (MVA) to (R)-mevalonate 5-phosphate (MVAP). Functions in the mevalonate (MVA) pathway leading to isopentenyl diphosphate (IPP), a key precursor for the biosynthesis of isoprenoid compounds such as archaeal membrane lipids. The chain is Mevalonate kinase from Methanocaldococcus jannaschii (strain ATCC 43067 / DSM 2661 / JAL-1 / JCM 10045 / NBRC 100440) (Methanococcus jannaschii).